The following is a 95-amino-acid chain: UPF0473 protein BPUM_2377 (95 aa).

This sequence belongs to the UPF0473 family.

This Bacillus pumilus (strain SAFR-032) protein is UPF0473 protein BPUM_2377.